The primary structure comprises 183 residues: Inner membrane-spanning protein YciB (183 aa).

The next 5 helical transmembrane spans lie at 19-39, 53-73, 76-96, 121-141, and 151-171; these read LYGV…QLIV, IMGI…DLNF, WKVT…QFVF, LGWA…SYYF, and TFGF…YLYP.

The protein belongs to the YciB family.

The protein localises to the cell inner membrane. Its function is as follows. Plays a role in cell envelope biogenesis, maintenance of cell envelope integrity and membrane homeostasis. This chain is Inner membrane-spanning protein YciB, found in Actinobacillus pleuropneumoniae serotype 7 (strain AP76).